The sequence spans 92 residues: MQVSTAALAVLLCTMALCNQFSASLAADTPTACCFSYTSRQIPQNFIADYFETSSQCSKPGVIFLTKRSRQVCADPSEEWVQKYVSDLELSA.

The signal sequence occupies residues 1-23 (MQVSTAALAVLLCTMALCNQFSA). 2 cysteine pairs are disulfide-bonded: Cys33/Cys57 and Cys34/Cys73.

It belongs to the intercrine beta (chemokine CC) family. In terms of assembly, self-associates. Also heterodimer of MIP-1-alpha(4-69) and MIP-1-beta(3-69). Interacts with CCR1. N-terminal processed form LD78-alpha(4-69) is produced by proteolytic cleavage after secretion from HTLV1-transformed T-cells.

It is found in the secreted. In terms of biological role, monokine with inflammatory and chemokinetic properties. Binds to CCR1, CCR4 and CCR5. One of the major HIV-suppressive factors produced by CD8+ T-cells. Recombinant MIP-1-alpha induces a dose-dependent inhibition of different strains of HIV-1, HIV-2, and simian immunodeficiency virus (SIV). In Homo sapiens (Human), this protein is C-C motif chemokine 3 (CCL3).